A 157-amino-acid polypeptide reads, in one-letter code: Small ribosomal subunit protein uS7 (157 aa).

It belongs to the universal ribosomal protein uS7 family. In terms of assembly, part of the 30S ribosomal subunit. Contacts proteins S9 and S11.

Its function is as follows. One of the primary rRNA binding proteins, it binds directly to 16S rRNA where it nucleates assembly of the head domain of the 30S subunit. Is located at the subunit interface close to the decoding center, probably blocks exit of the E-site tRNA. This chain is Small ribosomal subunit protein uS7, found in Francisella philomiragia subsp. philomiragia (strain ATCC 25017 / CCUG 19701 / FSC 153 / O#319-036).